The sequence spans 680 residues: uncharacterized protein (680 aa).

This sequence belongs to the HyuA family.

This is an uncharacterized protein from Methanocaldococcus jannaschii (strain ATCC 43067 / DSM 2661 / JAL-1 / JCM 10045 / NBRC 100440) (Methanococcus jannaschii).